A 230-amino-acid chain; its full sequence is Ribonuclease 3 (230 aa).

The region spanning Met-1–Gly-134 is the RNase III domain. Glu-47 serves as a coordination point for Mg(2+). Residue Asp-51 is part of the active site. The Mg(2+) site is built by Asp-120 and Glu-123. Glu-123 is a catalytic residue. The 70-residue stretch at Asp-160–Glu-229 folds into the DRBM domain.

This sequence belongs to the ribonuclease III family. As to quaternary structure, homodimer. Mg(2+) is required as a cofactor.

It localises to the cytoplasm. It carries out the reaction Endonucleolytic cleavage to 5'-phosphomonoester.. Functionally, digests double-stranded RNA. Involved in the processing of primary rRNA transcript to yield the immediate precursors to the large and small rRNAs (23S and 16S). Processes some mRNAs, and tRNAs when they are encoded in the rRNA operon. Processes pre-crRNA and tracrRNA of type II CRISPR loci if present in the organism. This Streptococcus pyogenes serotype M28 (strain MGAS6180) protein is Ribonuclease 3.